A 190-amino-acid chain; its full sequence is Inner membrane-spanning protein YciB (190 aa).

Helical transmembrane passes span 3–23 (FLFD…AGIY), 24–44 (VATT…WFKH), 49–69 (AMQW…LIFH), 76–96 (WKPT…VVVV), 121–141 (LVWA…AYNF), and 149–169 (FKLF…SVWL).

This sequence belongs to the YciB family.

It is found in the cell inner membrane. Functionally, plays a role in cell envelope biogenesis, maintenance of cell envelope integrity and membrane homeostasis. The sequence is that of Inner membrane-spanning protein YciB from Ralstonia pickettii (strain 12J).